A 249-amino-acid polypeptide reads, in one-letter code: Enolase-phosphatase E1 (249 aa).

The protein belongs to the HAD-like hydrolase superfamily. MasA/MtnC family. Monomer. Mg(2+) is required as a cofactor.

It catalyses the reaction 5-methylsulfanyl-2,3-dioxopentyl phosphate + H2O = 1,2-dihydroxy-5-(methylsulfanyl)pent-1-en-3-one + phosphate. It functions in the pathway amino-acid biosynthesis; L-methionine biosynthesis via salvage pathway; L-methionine from S-methyl-5-thio-alpha-D-ribose 1-phosphate: step 3/6. The protein operates within amino-acid biosynthesis; L-methionine biosynthesis via salvage pathway; L-methionine from S-methyl-5-thio-alpha-D-ribose 1-phosphate: step 4/6. In terms of biological role, bifunctional enzyme that catalyzes the enolization of 2,3-diketo-5-methylthiopentyl-1-phosphate (DK-MTP-1-P) into the intermediate 2-hydroxy-3-keto-5-methylthiopentenyl-1-phosphate (HK-MTPenyl-1-P), which is then dephosphorylated to form the acireductone 1,2-dihydroxy-3-keto-5-methylthiopentene (DHK-MTPene). This is Enolase-phosphatase E1 from Synechococcus sp. (strain CC9605).